A 178-amino-acid polypeptide reads, in one-letter code: Large ribosomal subunit protein uL6 (178 aa).

This sequence belongs to the universal ribosomal protein uL6 family. As to quaternary structure, part of the 50S ribosomal subunit.

Its function is as follows. This protein binds to the 23S rRNA, and is important in its secondary structure. It is located near the subunit interface in the base of the L7/L12 stalk, and near the tRNA binding site of the peptidyltransferase center. The chain is Large ribosomal subunit protein uL6 from Wolinella succinogenes (strain ATCC 29543 / DSM 1740 / CCUG 13145 / JCM 31913 / LMG 7466 / NCTC 11488 / FDC 602W) (Vibrio succinogenes).